Consider the following 107-residue polypeptide: Bombesin (107 aa).

The N-terminal stretch at 1–26 is a signal peptide; it reads MSAIPLNRILPLGFLLIFSFISLSSC. Positions 27–41 are excised as a propeptide; sequence MEFVEDPNNQGGLNL. The residue at position 42 (Q42) is a Pyrrolidone carboxylic acid. M55 bears the Methionine amide mark. Positions 56–107 are excised as a propeptide; the sequence is GKKSLQDTDFEEMESFAKRNVENMKAESERELRHAQLVVRNILEQYLKNMQN.

In terms of tissue distribution, expressed by the skin glands.

It is found in the secreted. In terms of biological role, stimulates smooth muscle contraction. Role in induction of hypothermia, stimulation of DNA replication and release of many gastrointestinal hormones. Possesses insulin-releasing activity. This chain is Bombesin, found in Bombina variegata (Yellow-bellied toad).